The sequence spans 454 residues: Bifunctional protein GlmU (454 aa).

The tract at residues 1–226 (MSLEIVILAA…AMEVQGVNDR (226 aa)) is pyrophosphorylase. Residues 8 to 11 (LAAG), Lys22, Gln73, 78 to 79 (GT), 99 to 101 (YGD), Gly136, Glu151, Asn166, and Asn224 each bind UDP-N-acetyl-alpha-D-glucosamine. Asp101 contacts Mg(2+). Asn224 is a binding site for Mg(2+). The tract at residues 227 to 247 (MQQAQLERHYQRLRAEELMRQ) is linker. Residues 248–454 (GVTLLDPQRL…NWKRPEKIKK (207 aa)) form an N-acetyltransferase region. Residues Arg330 and Lys348 each contribute to the UDP-N-acetyl-alpha-D-glucosamine site. His360 functions as the Proton acceptor in the catalytic mechanism. Tyr363 and Asn374 together coordinate UDP-N-acetyl-alpha-D-glucosamine. Acetyl-CoA is bound by residues Ala377, 383-384 (NY), Ser402, Ala420, and Arg437.

This sequence in the N-terminal section; belongs to the N-acetylglucosamine-1-phosphate uridyltransferase family. In the C-terminal section; belongs to the transferase hexapeptide repeat family. As to quaternary structure, homotrimer. The cofactor is Mg(2+).

Its subcellular location is the cytoplasm. The catalysed reaction is alpha-D-glucosamine 1-phosphate + acetyl-CoA = N-acetyl-alpha-D-glucosamine 1-phosphate + CoA + H(+). The enzyme catalyses N-acetyl-alpha-D-glucosamine 1-phosphate + UTP + H(+) = UDP-N-acetyl-alpha-D-glucosamine + diphosphate. It functions in the pathway nucleotide-sugar biosynthesis; UDP-N-acetyl-alpha-D-glucosamine biosynthesis; N-acetyl-alpha-D-glucosamine 1-phosphate from alpha-D-glucosamine 6-phosphate (route II): step 2/2. The protein operates within nucleotide-sugar biosynthesis; UDP-N-acetyl-alpha-D-glucosamine biosynthesis; UDP-N-acetyl-alpha-D-glucosamine from N-acetyl-alpha-D-glucosamine 1-phosphate: step 1/1. Its pathway is bacterial outer membrane biogenesis; LPS lipid A biosynthesis. Functionally, catalyzes the last two sequential reactions in the de novo biosynthetic pathway for UDP-N-acetylglucosamine (UDP-GlcNAc). The C-terminal domain catalyzes the transfer of acetyl group from acetyl coenzyme A to glucosamine-1-phosphate (GlcN-1-P) to produce N-acetylglucosamine-1-phosphate (GlcNAc-1-P), which is converted into UDP-GlcNAc by the transfer of uridine 5-monophosphate (from uridine 5-triphosphate), a reaction catalyzed by the N-terminal domain. The protein is Bifunctional protein GlmU of Pseudomonas aeruginosa (strain ATCC 15692 / DSM 22644 / CIP 104116 / JCM 14847 / LMG 12228 / 1C / PRS 101 / PAO1).